The following is a 174-amino-acid chain: UPF0113 protein APE_0516.1 (174 aa).

This sequence belongs to the UPF0113 family.

The sequence is that of UPF0113 protein APE_0516.1 from Aeropyrum pernix (strain ATCC 700893 / DSM 11879 / JCM 9820 / NBRC 100138 / K1).